Here is a 161-residue protein sequence, read N- to C-terminus: Cyclic pyranopterin monophosphate synthase (161 aa).

Residues Leu-78–His-80 and Met-116–Glu-117 contribute to the substrate site. Asp-131 is a catalytic residue.

The protein belongs to the MoaC family. As to quaternary structure, homohexamer; trimer of dimers.

The catalysed reaction is (8S)-3',8-cyclo-7,8-dihydroguanosine 5'-triphosphate = cyclic pyranopterin phosphate + diphosphate. It functions in the pathway cofactor biosynthesis; molybdopterin biosynthesis. Its function is as follows. Catalyzes the conversion of (8S)-3',8-cyclo-7,8-dihydroguanosine 5'-triphosphate to cyclic pyranopterin monophosphate (cPMP). This is Cyclic pyranopterin monophosphate synthase from Bordetella pertussis (strain Tohama I / ATCC BAA-589 / NCTC 13251).